A 344-amino-acid polypeptide reads, in one-letter code: Aurora kinase B (344 aa).

The disordered stretch occupies residues 1–22; that stretch reads MAQKENSYPWPYGRQTAPSGLS. T35 is modified (phosphothreonine). S62 is modified (phosphoserine). T64 carries the phosphothreonine modification. The region spanning 77–327 is the Protein kinase domain; sequence FEIGRPLGKG…LAQVSAHPWV (251 aa). Residues 83-91 and K106 each bind ATP; that span reads LGKGKFGNV. D200 functions as the Proton acceptor in the catalytic mechanism. K215 is modified (N6-acetyllysine). S227 is subject to Phosphoserine. T232 carries the phosphothreonine; by autocatalysis modification.

The protein belongs to the protein kinase superfamily. Ser/Thr protein kinase family. Aurora subfamily. Component of the chromosomal passenger complex (CPC) composed of at least BIRC5/survivin, CDCA8/borealin, INCENP, AURKB or AURKC; predominantly independent AURKB- and AURKC-containing complexes exist. Associates with RACGAP1 during M phase. Interacts with SPDYC; this interaction may be required for proper localization of active, Thr-232-phosphorylated AURKB form during prometaphase and metaphase. Interacts with p53/TP53. Interacts (via the middle kinase domain) with NOC2L (via the N- and C-terminus domains). Interacts with CDCA1. Interacts with EVI5. Interacts with JTB. Interacts with NDC80. Interacts with PSMA3. Interacts with RNF2/RING1B. Interacts with SEPTIN1. Interacts with SIRT2. Interacts with TACC1. Interacts with TTC28. Post-translationally, the phosphorylation of Thr-232 requires the binding to INCENP and occurs by means of an autophosphorylation mechanism. Thr-232 phosphorylation is indispensable for the AURKB kinase activity. Acetylated at Lys-215 by KAT5 at kinetochores, increasing AURKB activity and promoting accurate chromosome segregation in mitosis. In terms of processing, ubiquitinated by different BCR (BTB-CUL3-RBX1) E3 ubiquitin ligase complexes. Ubiquitinated by the BCR(KLHL9-KLHL13) E3 ubiquitin ligase complex, ubiquitination leads to removal from mitotic chromosomes and is required for cytokinesis. During anaphase, the BCR(KLHL21) E3 ubiquitin ligase complex recruits the CPC complex from chromosomes to the spindle midzone and mediates the ubiquitination of AURKB. Ubiquitination of AURKB by BCR(KLHL21) E3 ubiquitin ligase complex may not lead to its degradation by the proteasome. Deubiquitinated by USP35; inhibiting CDH1-mediated degradation of AURKB. High level expression seen in the thymus. It is also expressed in the spleen, lung, testis, colon, placenta and fetal liver. Expressed during S and G2/M phase and expression is up-regulated in cancer cells during M phase. In terms of tissue distribution, not expressed in normal liver, high expression in metastatic liver.

The protein localises to the nucleus. Its subcellular location is the chromosome. The protein resides in the centromere. It is found in the kinetochore. It localises to the cytoplasm. The protein localises to the cytoskeleton. Its subcellular location is the spindle. The protein resides in the midbody. The catalysed reaction is L-seryl-[protein] + ATP = O-phospho-L-seryl-[protein] + ADP + H(+). It catalyses the reaction L-threonyl-[protein] + ATP = O-phospho-L-threonyl-[protein] + ADP + H(+). With respect to regulation, activity is greatly increased when AURKB is within the CPC complex. In particular, AURKB-phosphorylated INCENP acts as an activator of AURKB. Positive feedback between HASPIN and AURKB contributes to CPC localization. Inhibited by ZM447439. In terms of biological role, serine/threonine-protein kinase component of the chromosomal passenger complex (CPC), a complex that acts as a key regulator of mitosis. The CPC complex has essential functions at the centromere in ensuring correct chromosome alignment and segregation and is required for chromatin-induced microtubule stabilization and spindle assembly. Involved in the bipolar attachment of spindle microtubules to kinetochores and is a key regulator for the onset of cytokinesis during mitosis. Required for central/midzone spindle assembly and cleavage furrow formation. Key component of the cytokinesis checkpoint, a process required to delay abscission to prevent both premature resolution of intercellular chromosome bridges and accumulation of DNA damage: phosphorylates CHMP4C, leading to retain abscission-competent VPS4 (VPS4A and/or VPS4B) at the midbody ring until abscission checkpoint signaling is terminated at late cytokinesis. AURKB phosphorylates the CPC complex subunits BIRC5/survivin, CDCA8/borealin and INCENP. Phosphorylation of INCENP leads to increased AURKB activity. Other known AURKB substrates involved in centromeric functions and mitosis are CENPA, DES/desmin, GPAF, KIF2C, NSUN2, RACGAP1, SEPTIN1, VIM/vimentin, HASPIN, and histone H3. A positive feedback loop involving HASPIN and AURKB contributes to localization of CPC to centromeres. Phosphorylation of VIM controls vimentin filament segregation in cytokinetic process, whereas histone H3 is phosphorylated at 'Ser-10' and 'Ser-28' during mitosis (H3S10ph and H3S28ph, respectively). AURKB is also required for kinetochore localization of BUB1 and SGO1. Phosphorylation of p53/TP53 negatively regulates its transcriptional activity. Key regulator of active promoters in resting B- and T-lymphocytes: acts by mediating phosphorylation of H3S28ph at active promoters in resting B-cells, inhibiting RNF2/RING1B-mediated ubiquitination of histone H2A and enhancing binding and activity of the USP16 deubiquitinase at transcribed genes. Acts as an inhibitor of CGAS during mitosis: catalyzes phosphorylation of the N-terminus of CGAS during the G2-M transition, blocking CGAS liquid phase separation and activation, and thereby preventing CGAS-induced autoimmunity. Phosphorylates KRT5 during anaphase and telophase. Phosphorylates ATXN10 which promotes phosphorylation of ATXN10 by PLK1 and may play a role in the regulation of cytokinesis and stimulating the proteasomal degradation of ATXN10. In Homo sapiens (Human), this protein is Aurora kinase B (AURKB).